The primary structure comprises 457 residues: Cystathionine beta-lyase, chloroplastic (457 aa).

A chloroplast-targeting transit peptide spans 1–51 (MFSRPFVTPVTIDLQVKSITAGNMWEGLGFYKPANSKSNQMICSKGFRLNC). Positions 120, 122, 150, 151, 268, and 270 each coordinate pyridoxal 5'-phosphate. K271 carries the post-translational modification N6-(pyridoxal phosphate)lysine.

It belongs to the trans-sulfuration enzymes family. Forms homodimers. May form homotetramers from two homodimers. It depends on pyridoxal 5'-phosphate as a cofactor.

It localises to the plastid. The protein resides in the chloroplast. The enzyme catalyses L,L-cystathionine + H2O = L-homocysteine + pyruvate + NH4(+). It catalyses the reaction an S-substituted L-cysteine + H2O = a thiol + pyruvate + NH4(+). In terms of biological role, catalyzes the degradation of cystathionine. In Mimosa pudica (Sensitive plant), this protein is Cystathionine beta-lyase, chloroplastic.